A 1301-amino-acid chain; its full sequence is Zinc finger protein 532 (1301 aa).

3 disordered regions span residues 26–206, 223–266, and 281–366; these read PKAA…RETE, AEDK…SSSK, and KAAS…IKTI. Basic and acidic residues predominate over residues 32-52; it reads SGHDDHESHMKQNAHGEDDSH. Residues 84 to 101 are compositionally biased toward polar residues; the sequence is PTGNGLHNGFLTASSLDS. The segment covering 102–111 has biased composition (basic and acidic residues); the sequence is YSKDGAKSLK. Over residues 122–133 the composition is skewed to polar residues; that stretch reads KDSTFSQFSPIS. Serine 130, serine 133, and serine 134 each carry phosphoserine. The span at 136-151 shows a compositional bias: acidic residues; it reads EEFDDDEKIEVDDPPD. Residues 158–170 are compositionally biased toward polar residues; that stretch reads SFRSNVLTGSAPQ. Lysine 175 carries the post-translational modification N6-acetyllysine. The segment covering 182-195 has biased composition (polar residues); it reads ENSSKTGLSTSGNV. Basic and acidic residues-rich tracts occupy residues 196–206 and 223–250; these read EKNKAVKRETE and AEDK…EKND. Threonine 205 carries the post-translational modification Phosphothreonine. 3 positions are modified to phosphoserine: serine 252, serine 307, and serine 314. Positions 303 to 315 are enriched in basic and acidic residues; the sequence is EVNDSPRAADKSP. The span at 337–359 shows a compositional bias: low complexity; the sequence is SISSENSSKGSPSSPAGSTPAIP. The residue at position 434 (serine 434) is a Phosphoserine. Glycyl lysine isopeptide (Lys-Gly) (interchain with G-Cter in SUMO2) cross-links involve residues lysine 459 and lysine 516. The C2H2-type 1; degenerate zinc-finger motif lies at 616–635; the sequence is YKCLECGDSFALEKSLTQHY. The segment at 754–779 adopts a C2H2-type 2; degenerate zinc-finger fold; that stretch reads LKCLECNEVFQDETSLATHFQQAADT. C2H2-type zinc fingers lie at residues 783 to 805, 842 to 865, 870 to 893, 905 to 927, and 936 to 959; these read KTCT…QRIH, FRCV…QGSH, YKCP…YTQH, YKCS…FDQH, and FKCP…KSMH. Residue lysine 980 forms a Glycyl lysine isopeptide (Lys-Gly) (interchain with G-Cter in SUMO2) linkage. The disordered stretch occupies residues 983-1017; sequence TQNSANQNKEDTKSMNGKEKLEKKSPSPVKKSMET. The span at 990–1017 shows a compositional bias: basic and acidic residues; the sequence is NKEDTKSMNGKEKLEKKSPSPVKKSMET. 2 consecutive C2H2-type zinc fingers follow at residues 1025–1048 and 1055–1078; these read WTCW…RKEH and HPCR…RIKH. The C2H2-type 10; degenerate zinc-finger motif lies at 1085-1111; the sequence is YACSHCPDSRRTFTKRLMLEKHVQLMH. Phosphoserine is present on serine 1140. Glycyl lysine isopeptide (Lys-Gly) (interchain with G-Cter in SUMO2) cross-links involve residues lysine 1144 and lysine 1167. The C2H2-type 11 zinc-finger motif lies at 1203–1226; that stretch reads YQCRECGLCYTSHVSLSRHLFIVH. Residues 1230–1263 are disordered; it reads EPQPVSKQNGAGEDNQQENKPSHEDESPDGAVSD. The C2H2-type 12 zinc finger occupies 1264 to 1286; the sequence is RKCKVCAKTFETEAALNTHMRTH.

Belongs to the krueppel C2H2-type zinc-finger protein family.

It is found in the nucleus. In terms of biological role, may be involved in transcriptional regulation. The polypeptide is Zinc finger protein 532 (ZNF532) (Homo sapiens (Human)).